Consider the following 148-residue polypeptide: 3-dehydroquinate dehydratase (148 aa).

Catalysis depends on Y22, which acts as the Proton acceptor. Residues N73, H79, and D86 each coordinate substrate. H99 functions as the Proton donor in the catalytic mechanism. Residues 100-101 and R110 contribute to the substrate site; that span reads LS.

The protein belongs to the type-II 3-dehydroquinase family. In terms of assembly, homododecamer.

The catalysed reaction is 3-dehydroquinate = 3-dehydroshikimate + H2O. The protein operates within metabolic intermediate biosynthesis; chorismate biosynthesis; chorismate from D-erythrose 4-phosphate and phosphoenolpyruvate: step 3/7. Functionally, catalyzes a trans-dehydration via an enolate intermediate. The polypeptide is 3-dehydroquinate dehydratase (Prochlorococcus marinus (strain MIT 9211)).